A 214-amino-acid polypeptide reads, in one-letter code: Cell division protein SepF (214 aa).

Positions 23-70 (YYDDRAPSRGFPRPRFDDGYGRYDGDDYDDPRREPADYPPPAGYRGGY) are disordered. Residues 36 to 58 (PRFDDGYGRYDGDDYDDPRREPA) are compositionally biased toward basic and acidic residues.

Belongs to the SepF family. Homodimer. Interacts with FtsZ.

It localises to the cytoplasm. In terms of biological role, cell division protein that is part of the divisome complex and is recruited early to the Z-ring. Probably stimulates Z-ring formation, perhaps through the cross-linking of FtsZ protofilaments. Its function overlaps with FtsA. This chain is Cell division protein SepF, found in Mycobacterium avium (strain 104).